A 407-amino-acid polypeptide reads, in one-letter code: Arginine deiminase (407 aa).

Cysteine 397 functions as the Amidino-cysteine intermediate in the catalytic mechanism.

This sequence belongs to the arginine deiminase family.

The protein localises to the cytoplasm. It carries out the reaction L-arginine + H2O = L-citrulline + NH4(+). The protein operates within amino-acid degradation; L-arginine degradation via ADI pathway; carbamoyl phosphate from L-arginine: step 1/2. In Escherichia coli O6:H1 (strain CFT073 / ATCC 700928 / UPEC), this protein is Arginine deiminase (arcA).